We begin with the raw amino-acid sequence, 117 residues long: Hemerythrin subunit beta (117 aa).

Residues histidine 24, histidine 53, glutamate 57, histidine 72, histidine 76, histidine 105, and aspartate 110 each contribute to the Fe cation site.

Belongs to the hemerythrin family. In terms of assembly, octamer composed of two types of chains: alpha and beta.

In terms of biological role, hemerythrin is a respiratory protein in blood cells of certain marine worms. The oxygen-binding site in each chain contains two iron atoms. The polypeptide is Hemerythrin subunit beta (Lingula reevii (Inarticulated brachiopod)).